Consider the following 176-residue polypeptide: MNEVVAKKYVKAILSDVNSAQLAKFISNLSEISAAFEIEKFRNIISLPTLKNSAKAEFILSLVQDPSENFKNFIKLLGANKRLSLIPAILNEIKSEQTLLDNIYHGSVYGNFELNGEQLSALEDKFSKRFDAKVKLGGSKSDYNGIKVELDDLGVEASFSMDRLKTQMSEYILKAI.

The protein belongs to the ATPase delta chain family. In terms of assembly, F-type ATPases have 2 components, F(1) - the catalytic core - and F(0) - the membrane proton channel. F(1) has five subunits: alpha(3), beta(3), gamma(1), delta(1), epsilon(1). F(0) has three main subunits: a(1), b(2) and c(10-14). The alpha and beta chains form an alternating ring which encloses part of the gamma chain. F(1) is attached to F(0) by a central stalk formed by the gamma and epsilon chains, while a peripheral stalk is formed by the delta and b chains.

Its subcellular location is the cell inner membrane. F(1)F(0) ATP synthase produces ATP from ADP in the presence of a proton or sodium gradient. F-type ATPases consist of two structural domains, F(1) containing the extramembraneous catalytic core and F(0) containing the membrane proton channel, linked together by a central stalk and a peripheral stalk. During catalysis, ATP synthesis in the catalytic domain of F(1) is coupled via a rotary mechanism of the central stalk subunits to proton translocation. Functionally, this protein is part of the stalk that links CF(0) to CF(1). It either transmits conformational changes from CF(0) to CF(1) or is implicated in proton conduction. The protein is ATP synthase subunit delta of Campylobacter curvus (strain 525.92).